The following is a 508-amino-acid chain: MKKAIAYMRFSSPGQMSGDSLNRQRRLIAEWLKVNSDYYLDTITYEDLGLSAFKGKHAQSGAFSEFLDAIEHGYILPGTTLLVESLDRLSREKVGEAIERLKLILNHGIDVITLCDNTVYNIDSLNEPYSLIKAILIAQRANEESEIKSSRVKLSWKKKRQDALESGTIMTASCPRWLSLDDKRTAFVPDPDRVKTIELIFKLRMERRSLNAIAKYLNDHAVKNFSGKESAWGPSVIEKLLANKALIGICVPSYRARGKGISEIAGYYPRVISDDLFYAVQEIRLAPFGISNSSKNPMLINLLRTVMKCEACGNTMIVHAVSGSLHGYYVCPMRRLHRCDRPSIKRDLVDYNIINELLFNCSKIQPVENKKDANETLELKIIELQMKINNLIVALSVAPEVTAIAEKIRLLDKELRRASVSLKTLKSKGVNSFSDFYAIDLTSKNGRELCRTLAYKTFEKIIINTDNKTCDIYFMNGIVFKHYPLMKVISAQQAISALKYMVDGEIYF.

In terms of domain architecture, Resolvase/invertase-type recombinase catalytic spans 3–163 (KAIAYMRFSS…LSWKKKRQDA (161 aa)). Ser11 (O-(5'-phospho-DNA)-serine intermediate) is an active-site residue. Positions 175 to 290 (PRWLSLDDKR…QEIRLAPFGI (116 aa)) form a DNA-binding region, recombinase.

This is an uncharacterized protein from Escherichia coli (strain K12).